The sequence spans 603 residues: Matrix metalloproteinase-17 (603 aa).

The N-terminal stretch at 1-35 is a signal peptide; the sequence is MRRRAARGPGPPPPGPGLSRLPLPLLLLLALGTRG. The propeptide occupies 36–125; the sequence is GCAAPAPAPR…PVLTQARRRR (90 aa). The Cysteine switch signature appears at 108 to 115; the sequence is PRCSLPDL. Residue Cys-110 participates in Zn(2+) binding. The N-linked (GlcNAc...) asparagine glycan is linked to Asn-137. His-248 is a Zn(2+) binding site. Glu-249 is a catalytic residue. Residues His-252 and His-258 each contribute to the Zn(2+) site. Positions 301-329 are disordered; sequence SPTAQPEEPPLLPEPPDNRSSAPPRKDVP. N-linked (GlcNAc...) asparagine glycosylation occurs at Asn-318. A disulfide bridge connects residues Cys-332 and Cys-523. Hemopexin repeat units follow at residues 333–378, 382–427, 428–475, and 476–523; these read STHF…WRGL, LDSV…FSLP, PGGI…WRGV, and PSTL…WLVC. Residues 537–571 are disordered; the sequence is DAAEGPRAPPGQHDQSRSEDGYEVCSCTSGASSPP. Residue Ser-565 is the site of GPI-anchor amidated serine attachment. Residues 566 to 603 constitute a propeptide, removed in mature form; that stretch reads GASSPPGAPGPLVAATMLLLLPPLSPGALWTAAQALTL.

It belongs to the peptidase M10A family. Zn(2+) is required as a cofactor. It depends on Ca(2+) as a cofactor. The precursor is cleaved by a furin endopeptidase. In terms of tissue distribution, expressed in brain, leukocytes, colon, ovary testis and breast cancer. Expressed also in many transformed and non-transformed cell types.

Its subcellular location is the cell membrane. The protein resides in the secreted. It is found in the extracellular space. The protein localises to the extracellular matrix. Functionally, endopeptidase that degrades various components of the extracellular matrix, such as fibrin. May be involved in the activation of membrane-bound precursors of growth factors or inflammatory mediators, such as tumor necrosis factor-alpha. May also be involved in tumoral process. Cleaves pro-TNF-alpha at the '74-Ala-|-Gln-75' site. Not obvious if able to proteolytically activate progelatinase A. Does not hydrolyze collagen types I, II, III, IV and V, gelatin, fibronectin, laminin, decorin nor alpha1-antitrypsin. The polypeptide is Matrix metalloproteinase-17 (MMP17) (Homo sapiens (Human)).